The sequence spans 322 residues: tRNA U34 carboxymethyltransferase (322 aa).

Residues lysine 91, tryptophan 105, lysine 110, glycine 129, 179 to 180, methionine 195, tyrosine 199, and arginine 314 each bind carboxy-S-adenosyl-L-methionine; that span reads LE.

This sequence belongs to the class I-like SAM-binding methyltransferase superfamily. CmoB family. Homotetramer.

The enzyme catalyses carboxy-S-adenosyl-L-methionine + 5-hydroxyuridine(34) in tRNA = 5-carboxymethoxyuridine(34) in tRNA + S-adenosyl-L-homocysteine + H(+). Catalyzes carboxymethyl transfer from carboxy-S-adenosyl-L-methionine (Cx-SAM) to 5-hydroxyuridine (ho5U) to form 5-carboxymethoxyuridine (cmo5U) at position 34 in tRNAs. The chain is tRNA U34 carboxymethyltransferase from Pseudomonas aeruginosa (strain ATCC 15692 / DSM 22644 / CIP 104116 / JCM 14847 / LMG 12228 / 1C / PRS 101 / PAO1).